The primary structure comprises 213 residues: Orotate phosphoribosyltransferase (213 aa).

K25 provides a ligand contact to 5-phospho-alpha-D-ribose 1-diphosphate. 33–34 is a binding site for orotate; it reads FF. Residues 71 to 72, R98, K99, K102, H104, and 124 to 132 each bind 5-phospho-alpha-D-ribose 1-diphosphate; these read YK and DDVITSGTA. 2 residues coordinate orotate: T128 and R156.

The protein belongs to the purine/pyrimidine phosphoribosyltransferase family. PyrE subfamily. In terms of assembly, homodimer. Mg(2+) is required as a cofactor.

The enzyme catalyses orotidine 5'-phosphate + diphosphate = orotate + 5-phospho-alpha-D-ribose 1-diphosphate. The protein operates within pyrimidine metabolism; UMP biosynthesis via de novo pathway; UMP from orotate: step 1/2. In terms of biological role, catalyzes the transfer of a ribosyl phosphate group from 5-phosphoribose 1-diphosphate to orotate, leading to the formation of orotidine monophosphate (OMP). The chain is Orotate phosphoribosyltransferase from Buchnera aphidicola subsp. Acyrthosiphon pisum (strain 5A).